A 73-amino-acid chain; its full sequence is Sodium channel neurotoxin MeuNaTxalpha-13 (73 aa).

Residues 1–5 (TGVES) form the signal peptide. The LCN-type CS-alpha/beta domain occupies 7 to 71 (RDAYIAKPHN…VPIRIPGKCH (65 aa)). 4 cysteine pairs are disulfide-bonded: cysteine 17–cysteine 70, cysteine 21–cysteine 43, cysteine 29–cysteine 53, and cysteine 33–cysteine 55. Positions 72-73 (RR) are cleaved as a propeptide — removed by a carboxypeptidase.

Belongs to the long (4 C-C) scorpion toxin superfamily. Sodium channel inhibitor family. Alpha subfamily. As to expression, expressed by the venom gland.

The protein resides in the secreted. Functionally, alpha toxins bind voltage-independently at site-3 of sodium channels (Nav) and inhibit the inactivation of the activated channels, thereby blocking neuronal transmission. This Mesobuthus eupeus (Lesser Asian scorpion) protein is Sodium channel neurotoxin MeuNaTxalpha-13.